Here is a 279-residue protein sequence, read N- to C-terminus: Putative colanic acid biosynthesis glycosyl transferase WcaA (279 aa).

To R.meliloti ExoO.

The protein operates within slime biogenesis; slime polysaccharide biosynthesis. This is Putative colanic acid biosynthesis glycosyl transferase WcaA (wcaA) from Escherichia coli (strain K12).